Reading from the N-terminus, the 420-residue chain is UDP-N-acetylglucosamine 1-carboxyvinyltransferase (420 aa).

Lysine 22–asparagine 23 contacts phosphoenolpyruvate. Arginine 93 provides a ligand contact to UDP-N-acetyl-alpha-D-glucosamine. Catalysis depends on cysteine 117, which acts as the Proton donor. A 2-(S-cysteinyl)pyruvic acid O-phosphothioketal modification is found at cysteine 117. Positions 307 and 329 each coordinate UDP-N-acetyl-alpha-D-glucosamine.

It belongs to the EPSP synthase family. MurA subfamily.

The protein localises to the cytoplasm. It carries out the reaction phosphoenolpyruvate + UDP-N-acetyl-alpha-D-glucosamine = UDP-N-acetyl-3-O-(1-carboxyvinyl)-alpha-D-glucosamine + phosphate. It participates in cell wall biogenesis; peptidoglycan biosynthesis. Functionally, cell wall formation. Adds enolpyruvyl to UDP-N-acetylglucosamine. The protein is UDP-N-acetylglucosamine 1-carboxyvinyltransferase of Marinobacter nauticus (strain ATCC 700491 / DSM 11845 / VT8) (Marinobacter aquaeolei).